We begin with the raw amino-acid sequence, 38 residues long: DNA binding protein ORF8 (38 aa).

The protein belongs to the microviridae J protein family.

It is found in the virion. The protein localises to the host cytoplasm. Mediates ssDNA packaging into virion, it locates to the internal surface of the capsid, thereby displacing the internal scaffolding protein during virion formation. Additionally, protein ORF8 plays a role in viral attachment to the host cell. This is DNA binding protein ORF8 from Spiroplasma melliferum (SpV4).